The sequence spans 305 residues: tRNA pseudouridine synthase B (305 aa).

The active-site Nucleophile is D41.

The protein belongs to the pseudouridine synthase TruB family. Type 1 subfamily.

The catalysed reaction is uridine(55) in tRNA = pseudouridine(55) in tRNA. In terms of biological role, responsible for synthesis of pseudouridine from uracil-55 in the psi GC loop of transfer RNAs. This chain is tRNA pseudouridine synthase B, found in Prochlorococcus marinus (strain MIT 9515).